We begin with the raw amino-acid sequence, 169 residues long: Endoribonuclease YbeY (169 aa).

Zn(2+) contacts are provided by H128, H132, and H138.

It belongs to the endoribonuclease YbeY family. Requires Zn(2+) as cofactor.

The protein localises to the cytoplasm. Functionally, single strand-specific metallo-endoribonuclease involved in late-stage 70S ribosome quality control and in maturation of the 3' terminus of the 16S rRNA. The protein is Endoribonuclease YbeY of Cyanothece sp. (strain PCC 7425 / ATCC 29141).